The chain runs to 234 residues: 2-amino-5-formylamino-6-ribosylaminopyrimidin-4(3H)-one 5'-monophosphate deformylase (234 aa).

Fe cation-binding residues include Glu30, His32, Asp41, and His111.

This sequence belongs to the creatininase superfamily. FAPy deformylase family. Homodimer. Requires Fe(2+) as cofactor. The cofactor is Zn(2+).

It catalyses the reaction 2-amino-5-formylamino-6-(5-phospho-D-ribosylamino)pyrimidin-4(3H)-one + H2O = 2,5-diamino-6-(1-D-ribosylamino)pyrimidin-4(3H)-one 5'-phosphate + formate + H(+). Its pathway is cofactor biosynthesis; coenzyme F420 biosynthesis. The protein operates within cofactor biosynthesis; riboflavin biosynthesis. In terms of biological role, catalyzes the hydrolysis of the formamide of 2-amino-5-formylamino-6-ribosylamino-4(3H)-pyrimidinone 5'-monophosphate (FAPy) to form 2,5-diamino-6-ribosylamino-4(3H)-pyrimidinone 5'-phosphate (APy). This Methanothermobacter thermautotrophicus (strain ATCC 29096 / DSM 1053 / JCM 10044 / NBRC 100330 / Delta H) (Methanobacterium thermoautotrophicum) protein is 2-amino-5-formylamino-6-ribosylaminopyrimidin-4(3H)-one 5'-monophosphate deformylase.